Consider the following 82-residue polypeptide: DNA-directed RNA polymerase subunit omega (82 aa).

Belongs to the RNA polymerase subunit omega family. As to quaternary structure, in cyanobacteria the RNAP catalytic core is composed of 2 alpha, 1 beta, 1 beta', 1 gamma and 1 omega subunit. When a sigma factor is associated with the core the holoenzyme is formed, which can initiate transcription.

It catalyses the reaction RNA(n) + a ribonucleoside 5'-triphosphate = RNA(n+1) + diphosphate. Its function is as follows. Promotes RNA polymerase assembly. Latches the N- and C-terminal regions of the beta' subunit thereby facilitating its interaction with the beta and alpha subunits. This Synechococcus sp. (strain CC9902) protein is DNA-directed RNA polymerase subunit omega.